Consider the following 1040-residue polypeptide: Multidrug resistance protein MdtB (1040 aa).

The next 12 membrane-spanning stretches (helical) occupy residues 16-36 (FIMR…AGII), 347-367 (LMMA…NIPA), 369-389 (IIPG…MVFL), 396-416 (LTLM…IVVI), 440-460 (IGFT…PLLF), 472-492 (FAIT…TLTP), 537-557 (WLTL…WVFI), 863-883 (LGST…VLGI), 888-908 (FIHP…ALLA), 911-931 (IAGS…IGIV), 968-988 (ILMT…STGV), and 998-1018 (IGMV…TPVI).

It belongs to the resistance-nodulation-cell division (RND) (TC 2.A.6) family. MdtB subfamily. Part of a tripartite efflux system composed of MdtA, MdtB and MdtC. MdtB forms a heteromultimer with MdtC.

It is found in the cell inner membrane. This chain is Multidrug resistance protein MdtB, found in Shigella sonnei (strain Ss046).